We begin with the raw amino-acid sequence, 126 residues long: Large ribosomal subunit protein bL12 (126 aa).

The protein belongs to the bacterial ribosomal protein bL12 family. In terms of assembly, homodimer. Part of the ribosomal stalk of the 50S ribosomal subunit. Forms a multimeric L10(L12)X complex, where L10 forms an elongated spine to which 2 to 4 L12 dimers bind in a sequential fashion. Binds GTP-bound translation factors.

Forms part of the ribosomal stalk which helps the ribosome interact with GTP-bound translation factors. Is thus essential for accurate translation. In Solibacter usitatus (strain Ellin6076), this protein is Large ribosomal subunit protein bL12.